We begin with the raw amino-acid sequence, 589 residues long: Muscarinic acetylcholine receptor M3 (589 aa).

The Extracellular portion of the chain corresponds to 1 to 66 (MTLHSNSTTS…DPLGGHTIWQ (66 aa)). Residues asparagine 6, asparagine 15, asparagine 41, asparagine 48, and asparagine 52 are each glycosylated (N-linked (GlcNAc...) asparagine). Residues 67–90 (VVFIAFLTGFLALVTIIGNILVIV) traverse the membrane as a helical segment. Residues 91–103 (AFKVNKQLKTVNN) lie on the Cytoplasmic side of the membrane. A helical membrane pass occupies residues 104-129 (YFLLSLACADLIIGVISMNLFTTYII). Topologically, residues 130–141 (MNRWALGNLACD) are extracellular. A disulfide bond links cysteine 140 and cysteine 220. A helical transmembrane segment spans residues 142-163 (LWLSIDYVASNASVMNLLVISF). Topologically, residues 164-183 (DRYFSITRPLTYRAKRTTKR) are cytoplasmic. Residues 184–205 (AGVMIGLAWVISFVLWAPAILF) form a helical membrane-spanning segment. The Extracellular portion of the chain corresponds to 206-228 (WQYFVGKRTVPPGECFIQFLSEP). The chain crosses the membrane as a helical span at residues 229 to 251 (TITFGTAIAAFYMPVTIMTILYW). Residues 252–490 (RIYKETEKRT…SLIKEKKAAQ (239 aa)) lie on the Cytoplasmic side of the membrane. A Basolateral sorting signal motif is present at residues 274–280 (AEAENFV). 2 disordered regions span residues 275-295 (EAENFVHPTGSSRSCSSYELQ) and 323-356 (AEQMDQDHSSSDSWNNNDAAASLENSASSDEEDI). Positions 283 to 295 (TGSSRSCSSYELQ) are enriched in polar residues. Residues 333-344 (SDSWNNNDAAAS) are compositionally biased toward low complexity. A Phosphoserine modification is found at serine 384. Residues 491-513 (TLSAILLAFIITWTPYNIMVLVN) form a helical membrane-spanning segment. The Extracellular portion of the chain corresponds to 514–525 (TFCDSCIPKTYW). Cysteine 516 and cysteine 519 are joined by a disulfide. The chain crosses the membrane as a helical span at residues 526-545 (NLGYWLCYINSTVNPVCYAL). The Cytoplasmic segment spans residues 546–589 (CNKTFRTTFKMLLLCQCDKRKRRKQQYQQRQSVIFHKRVPEQAL).

The protein belongs to the G-protein coupled receptor 1 family. Muscarinic acetylcholine receptor subfamily. CHRM3 sub-subfamily. In terms of assembly, homodimer; the dimers can form tetramers. Interacts with NALCN. Interacts with TMEM147. Expressed in cerebral cortex, submandibular gland, hypothalamus, pancreas, liver, and ileum.

It is found in the cell membrane. The protein resides in the postsynaptic cell membrane. It localises to the basolateral cell membrane. The protein localises to the endoplasmic reticulum membrane. Functionally, the muscarinic acetylcholine receptor mediates various cellular responses, including inhibition of adenylate cyclase, breakdown of phosphoinositides and modulation of potassium channels through the action of G proteins. Primary transducing effect is Pi turnover. The protein is Muscarinic acetylcholine receptor M3 (Chrm3) of Mus musculus (Mouse).